The primary structure comprises 381 residues: Hydrogenase nickel incorporation protein HupN (381 aa).

At M1–A39 the chain is on the cytoplasmic side. The helical transmembrane segment at V40–F60 threads the bilayer. The Periplasmic portion of the chain corresponds to A61–R63. The chain crosses the membrane as a helical span at residues P64–A84. Over D85–Y110 the chain is Cytoplasmic. Residues F111–V131 form a helical membrane-spanning segment. The Periplasmic portion of the chain corresponds to S132 to S149. The helical transmembrane segment at V150–W170 threads the bilayer. The Cytoplasmic segment spans residues R171 to Y215. A helical membrane pass occupies residues P216–I236. At S237 to R243 the chain is on the periplasmic side. Residues G244–V264 form a helical membrane-spanning segment. The Cytoplasmic portion of the chain corresponds to D265–T292. The helical transmembrane segment at I293–I313 threads the bilayer. Topologically, residues G314–S333 are periplasmic. Residues L334–V354 traverse the membrane as a helical segment. Residues L355 to V381 lie on the Cytoplasmic side of the membrane.

Belongs to the NiCoT transporter (TC 2.A.52) family.

Its subcellular location is the cell inner membrane. Involved in nickel incorporation/metabolism into the hydrogenase apoprotein. This chain is Hydrogenase nickel incorporation protein HupN (hupN), found in Bradyrhizobium diazoefficiens (strain JCM 10833 / BCRC 13528 / IAM 13628 / NBRC 14792 / USDA 110).